Here is a 33-residue protein sequence, read N- to C-terminus: Phospholipase A2 homolog BmarPLA2 (33 aa).

This sequence belongs to the phospholipase A2 family. Group II subfamily. K49 sub-subfamily. Homodimer; non-covalently linked. In terms of tissue distribution, expressed by the venom gland.

It localises to the secreted. Functionally, snake phospholipase A2 homolog that lacks enzymatic activity. May display myotoxin activity. In isolated heart decreases cardiac frequency. Also decreases mean arterial pressure. Does not show antimicrobial activity. Does not change renal parameters (such as perfusion pressure, renal vascular resistance, urinary flow, glomerular filtration rate and sodium tubular transport). This Bothrops marajoensis (Marajo lancehead) protein is Phospholipase A2 homolog BmarPLA2.